The sequence spans 261 residues: Ribosomal RNA small subunit methyltransferase J (261 aa).

Residues 109-110 (RD), 125-126 (ER), and Asp179 contribute to the S-adenosyl-L-methionine site.

The protein belongs to the methyltransferase superfamily. RsmJ family.

The protein resides in the cytoplasm. It catalyses the reaction guanosine(1516) in 16S rRNA + S-adenosyl-L-methionine = N(2)-methylguanosine(1516) in 16S rRNA + S-adenosyl-L-homocysteine + H(+). In terms of biological role, specifically methylates the guanosine in position 1516 of 16S rRNA. This chain is Ribosomal RNA small subunit methyltransferase J, found in Pseudomonas aeruginosa (strain ATCC 15692 / DSM 22644 / CIP 104116 / JCM 14847 / LMG 12228 / 1C / PRS 101 / PAO1).